The chain runs to 348 residues: Gamma-glutamyl hydrolase 1 (348 aa).

The N-terminal stretch at 1–23 is a signal peptide; the sequence is MIDNNCLYKEELNRNSYSGLAKE. Positions 46-342 constitute a Gamma-glutamyl hydrolase domain; sequence SPDPNLNYRP…RGYDEVYIFT (297 aa). Cys-156 acts as the Nucleophile in catalysis. Residue His-269 is part of the active site.

It belongs to the peptidase C26 family. In terms of tissue distribution, highly expressed in roots and at lower levels in leaves, stems and siliques.

The protein resides in the vacuole. It localises to the secreted. Its subcellular location is the extracellular space. The protein localises to the cell wall. The enzyme catalyses (6S)-5,6,7,8-tetrahydrofolyl-(gamma-L-Glu)(n) + (n-1) H2O = (6S)-5,6,7,8-tetrahydrofolate + (n-1) L-glutamate. Cleaves the polyglutamate sidechains of folate polyglutamates in the vacuole. Is important for polyglutamyl tail length determination before vacuolar exit. Plays a role in folate stability and intracellular folate content. The chain is Gamma-glutamyl hydrolase 1 (GGH1) from Arabidopsis thaliana (Mouse-ear cress).